A 76-amino-acid polypeptide reads, in one-letter code: NADH dehydrogenase [ubiquinone] 1 subunit C1, mitochondrial (76 aa).

A mitochondrion-targeting transit peptide spans 1 to 27 (MAPSVVLRSFSRLLAPARLPSCSSTRS). The chain crosses the membrane as a helical span at residues 40 to 59 (NWLAVGLSVGASVFMWIYLI).

This sequence belongs to the complex I NDUFC1 subunit family. In terms of assembly, complex I is composed of 45 different subunits.

The protein localises to the mitochondrion inner membrane. In terms of biological role, accessory subunit of the mitochondrial membrane respiratory chain NADH dehydrogenase (Complex I), that is believed not to be involved in catalysis. Complex I functions in the transfer of electrons from NADH to the respiratory chain. The immediate electron acceptor for the enzyme is believed to be ubiquinone. The protein is NADH dehydrogenase [ubiquinone] 1 subunit C1, mitochondrial (Ndufc1) of Mus musculus (Mouse).